Consider the following 468-residue polypeptide: ATP synthase subunit beta (468 aa).

An ATP-binding site is contributed by 153 to 160 (GGAGVGKT).

It belongs to the ATPase alpha/beta chains family. In terms of assembly, F-type ATPases have 2 components, CF(1) - the catalytic core - and CF(0) - the membrane proton channel. CF(1) has five subunits: alpha(3), beta(3), gamma(1), delta(1), epsilon(1). CF(0) has three main subunits: a(1), b(2) and c(9-12). The alpha and beta chains form an alternating ring which encloses part of the gamma chain. CF(1) is attached to CF(0) by a central stalk formed by the gamma and epsilon chains, while a peripheral stalk is formed by the delta and b chains.

The protein resides in the cell inner membrane. The catalysed reaction is ATP + H2O + 4 H(+)(in) = ADP + phosphate + 5 H(+)(out). Functionally, produces ATP from ADP in the presence of a proton gradient across the membrane. The catalytic sites are hosted primarily by the beta subunits. This chain is ATP synthase subunit beta, found in Nautilia profundicola (strain ATCC BAA-1463 / DSM 18972 / AmH).